The following is a 526-amino-acid chain: Phosphoenolpyruvate carboxykinase (ATP) 2 (526 aa).

The substrate site is built by Arg55, Tyr190, and Lys196. Residues Lys196, His215, and 231–239 (GLSGTGKTT) each bind ATP. Positions 196 and 215 each coordinate Mn(2+). A Mn(2+)-binding site is contributed by Asp252. Residues Glu280, Arg317, and Thr442 each coordinate ATP. Residue Arg317 coordinates substrate.

It belongs to the phosphoenolpyruvate carboxykinase (ATP) family. The cofactor is Mn(2+).

The protein resides in the cytoplasm. The catalysed reaction is oxaloacetate + ATP = phosphoenolpyruvate + ADP + CO2. Its pathway is carbohydrate biosynthesis; gluconeogenesis. Its function is as follows. Involved in the gluconeogenesis. Catalyzes the conversion of oxaloacetate (OAA) to phosphoenolpyruvate (PEP) through direct phosphoryl transfer between the nucleoside triphosphate and OAA. This is Phosphoenolpyruvate carboxykinase (ATP) 2 from Moorella thermoacetica (strain ATCC 39073 / JCM 9320).